Here is a 283-residue protein sequence, read N- to C-terminus: Non-selective voltage-gated ion channel VDAC3 (283 aa).

C2 carries the N-acetylcysteine modification. Phosphothreonine is present on T4. N6-acetyllysine occurs at positions 12, 15, and 20. The next 2 membrane-spanning stretches (beta stranded) occupy residues M26–S35 and V39–A47. Glycyl lysine isopeptide (Lys-Gly) (interchain with G-Cter in ubiquitin) cross-links involve residues K53 and K61. The next 3 membrane-spanning stretches (beta stranded) occupy residues A54–V64, L69–N76, and T80–N89. Position 90 is an N6-acetyllysine (K90). A beta stranded membrane pass occupies residues L95 to V104. Residues K109 and K110 each participate in a glycyl lysine isopeptide (Lys-Gly) (interchain with G-Cter in ubiquitin) cross-link. 10 consecutive transmembrane segments (beta stranded) span residues S111–R120, F123–D130, T137–A145, L150–D158, K163–A175, F178–N185, E189–V198, I202–T211, R218–L227, and T231–N238. A Glycyl lysine isopeptide (Lys-Gly) (interchain with G-Cter in ubiquitin) cross-link involves residue K163. S241 is modified (phosphoserine). NAD(+) is bound by residues L242 to G244 and S260 to D264. 2 beta stranded membrane passes run L242 to L251 and G254 to I263. K266 carries the post-translational modification N6-acetyllysine; alternate. A Glycyl lysine isopeptide (Lys-Gly) (interchain with G-Cter in ubiquitin); alternate cross-link involves residue K266. A beta stranded membrane pass occupies residues H273–E282. K274 participates in a covalent cross-link: Glycyl lysine isopeptide (Lys-Gly) (interchain with G-Cter in ubiquitin).

This sequence belongs to the eukaryotic mitochondrial porin family. As to quaternary structure, interacts with ARMC12 in a TBC1D21-dependent manner. Interacts with MISFA. Post-translationally, ubiquitinated by PRKN during mitophagy, leading to its degradation and enhancement of mitophagy. Deubiquitinated by USP30. In terms of tissue distribution, expressed in erythrocytes (at protein level). Widely expressed. Highest in testis.

The protein resides in the mitochondrion outer membrane. It is found in the membrane. It catalyses the reaction chloride(in) = chloride(out). The catalysed reaction is K(+)(in) = K(+)(out). In terms of biological role, non-selective voltage-gated ion channel that mediates the transport of anions and cations through the mitochondrion outer membrane and plasma membrane. Forms a high-conducting channel with a stable open state and a voltage-induced closure with a mild preference for anions over cations. Involved in male fertility and sperm mitochondrial sheath formation. This chain is Non-selective voltage-gated ion channel VDAC3, found in Homo sapiens (Human).